The sequence spans 857 residues: Protein dalmatian (857 aa).

Disordered regions lie at residues 1–50 (MVRT…KLSI) and 146–194 (VQKS…FFHR). Composition is skewed to polar residues over residues 146-156 (VQKSTQPQNIK) and 165-176 (SPCQQRIRSKSP). A phosphoserine mark is found at Ser-173, Ser-175, Ser-184, and Ser-222. The segment covering 251–271 (GKPRAKRTAKKVRPVGNRRKV) has biased composition (basic residues). Residues 251-281 (GKPRAKRTAKKVRPVGNRRKVSTKDNEPEPV) are disordered. Ser-405 is modified (phosphoserine). Disordered stretches follow at residues 470 to 514 (SICP…NAEN) and 737 to 830 (PPRP…RDIE). Basic and acidic residues predominate over residues 771-781 (KQPRRTYVKER). A compositionally biased stretch (acidic residues) spans 797–806 (SESEDEDEQD). Over residues 807-816 (SHDKSLDSPE) the composition is skewed to basic and acidic residues. The span at 817–826 (KKRHHVKRPR) shows a compositional bias: basic residues.

It is found in the nucleus. It localises to the chromosome. In terms of biological role, regulator of sister chromatid cohesion in mitosis. Probably involved in development of the central nervous system. The polypeptide is Protein dalmatian (dmt) (Drosophila melanogaster (Fruit fly)).